Consider the following 343-residue polypeptide: Selenide, water dikinase (343 aa).

Selenocysteine 16 is a catalytic residue. Position 16 (selenocysteine 16) is a non-standard amino acid, selenocysteine. Residues lysine 19 and 46–48 (GAE) each bind ATP. Aspartate 49 contributes to the Mg(2+) binding site. Residues aspartate 66, aspartate 89, and 137–139 (GHT) contribute to the ATP site. Mg(2+) is bound at residue aspartate 89. Position 225 (aspartate 225) interacts with Mg(2+).

The protein belongs to the selenophosphate synthase 1 family. Class I subfamily. As to quaternary structure, homodimer. Requires Mg(2+) as cofactor.

It carries out the reaction hydrogenselenide + ATP + H2O = selenophosphate + AMP + phosphate + 2 H(+). Synthesizes selenophosphate from selenide and ATP. In Citrifermentans bemidjiense (strain ATCC BAA-1014 / DSM 16622 / JCM 12645 / Bem) (Geobacter bemidjiensis), this protein is Selenide, water dikinase.